The following is a 194-amino-acid chain: Peptidyl-tRNA hydrolase (194 aa).

Tyr17 provides a ligand contact to tRNA. His22 (proton acceptor) is an active-site residue. TRNA contacts are provided by Phe68, Asn70, and Asn116.

Belongs to the PTH family. As to quaternary structure, monomer.

It is found in the cytoplasm. The enzyme catalyses an N-acyl-L-alpha-aminoacyl-tRNA + H2O = an N-acyl-L-amino acid + a tRNA + H(+). Functionally, hydrolyzes ribosome-free peptidyl-tRNAs (with 1 or more amino acids incorporated), which drop off the ribosome during protein synthesis, or as a result of ribosome stalling. In terms of biological role, catalyzes the release of premature peptidyl moieties from peptidyl-tRNA molecules trapped in stalled 50S ribosomal subunits, and thus maintains levels of free tRNAs and 50S ribosomes. This chain is Peptidyl-tRNA hydrolase, found in Shewanella halifaxensis (strain HAW-EB4).